Reading from the N-terminus, the 218-residue chain is Elongation factor Ts (218 aa).

The segment at 82–85 (TDFV) is involved in Mg(2+) ion dislocation from EF-Tu.

This sequence belongs to the EF-Ts family.

The protein resides in the cytoplasm. Its function is as follows. Associates with the EF-Tu.GDP complex and induces the exchange of GDP to GTP. It remains bound to the aminoacyl-tRNA.EF-Tu.GTP complex up to the GTP hydrolysis stage on the ribosome. The protein is Elongation factor Ts of Prochlorococcus marinus (strain MIT 9312).